A 155-amino-acid polypeptide reads, in one-letter code: uncharacterized protein (155 aa).

The segment at 1–34 is disordered; that stretch reads MESLQTPQHRENQDKREKEYGVKHMPMGNNAGNL. Residues 8-22 are compositionally biased toward basic and acidic residues; that stretch reads QHRENQDKREKEYGV. A helical transmembrane segment spans residues 115-135; sequence MSLLLLPAFSGLTWAPFLFLF.

Its subcellular location is the membrane. This is an uncharacterized protein from Homo sapiens (Human).